The sequence spans 332 residues: Ornithine carbamoyltransferase 1, catabolic (332 aa).

Carbamoyl phosphate-binding positions include 56–59 (STRT), Gln83, Arg107, and 134–137 (HPTQ). Residues Asn167, Asp231, and 235–236 (SM) each bind L-ornithine. Residues 273-274 (CL) and Arg318 contribute to the carbamoyl phosphate site.

This sequence belongs to the aspartate/ornithine carbamoyltransferase superfamily. OTCase family.

It localises to the cytoplasm. The enzyme catalyses carbamoyl phosphate + L-ornithine = L-citrulline + phosphate + H(+). It participates in amino-acid degradation; L-arginine degradation via ADI pathway; carbamoyl phosphate from L-arginine: step 2/2. Functionally, reversibly catalyzes the transfer of the carbamoyl group from carbamoyl phosphate (CP) to the N(epsilon) atom of ornithine (ORN) to produce L-citrulline. The sequence is that of Ornithine carbamoyltransferase 1, catabolic (arcB1) from Staphylococcus epidermidis (strain ATCC 12228 / FDA PCI 1200).